A 147-amino-acid chain; its full sequence is 16 kDa phloem protein 2 (147 aa).

The 103-residue stretch at 1–103 (MPHGTLEVVL…FVEGSIPPTA (103 aa)) folds into the C2 domain. Residues D20, D26, D73, D75, and D81 each coordinate Ca(2+). Residues 126–147 (ENRSRGMDEESYGGWKNSEASY) form a disordered region.

Ca(2+) serves as cofactor.

In terms of biological role, binds to both sense and antisense RNA. Can also bind sheared DNA and dodecamer DNA with a low affinity. Interacts with mesophyll plasmodesmata to mediate its own cell-to-cell transport and potentiate RNA trafficking. May play a role in plant defense signaling. The protein is 16 kDa phloem protein 2 of Arabidopsis thaliana (Mouse-ear cress).